The following is a 306-amino-acid chain: Protein-L-isoaspartate O-methyltransferase 2 (306 aa).

The disordered stretch occupies residues 1-82 (MSTTPPRNKF…ASAATAGGGG (82 aa)). Residues 38–48 (PAAPTPAPAKP) show a composition bias toward pro residues. Residues 54–77 (PRTAAPAPAPVPASAVEQRASAAT) show a composition bias toward low complexity. S142 is an active-site residue.

The protein belongs to the methyltransferase superfamily. L-isoaspartyl/D-aspartyl protein methyltransferase family.

The protein resides in the cytoplasm. The enzyme catalyses [protein]-L-isoaspartate + S-adenosyl-L-methionine = [protein]-L-isoaspartate alpha-methyl ester + S-adenosyl-L-homocysteine. In terms of biological role, catalyzes the methyl esterification of L-isoaspartyl residues in peptides and proteins that result from spontaneous decomposition of normal L-aspartyl and L-asparaginyl residues. It plays a role in the repair and/or degradation of damaged proteins. The chain is Protein-L-isoaspartate O-methyltransferase 2 from Cupriavidus necator (strain ATCC 17699 / DSM 428 / KCTC 22496 / NCIMB 10442 / H16 / Stanier 337) (Ralstonia eutropha).